Reading from the N-terminus, the 1392-residue chain is DNA-directed RNA polymerase subunit beta'' (1392 aa).

Residues Cys224, Cys295, Cys302, and Cys305 each contribute to the Zn(2+) site.

This sequence belongs to the RNA polymerase beta' chain family. RpoC2 subfamily. In terms of assembly, in plastids the minimal PEP RNA polymerase catalytic core is composed of four subunits: alpha, beta, beta', and beta''. When a (nuclear-encoded) sigma factor is associated with the core the holoenzyme is formed, which can initiate transcription. Requires Zn(2+) as cofactor.

It is found in the plastid. It localises to the chloroplast. The catalysed reaction is RNA(n) + a ribonucleoside 5'-triphosphate = RNA(n+1) + diphosphate. DNA-dependent RNA polymerase catalyzes the transcription of DNA into RNA using the four ribonucleoside triphosphates as substrates. This chain is DNA-directed RNA polymerase subunit beta'', found in Eucalyptus globulus subsp. globulus (Tasmanian blue gum).